A 178-amino-acid chain; its full sequence is Negative modulator of initiation of replication (178 aa).

The segment at 113-117 (RTRVY) is interaction with DNA.

This sequence belongs to the SeqA family. Homodimer. Polymerizes to form helical filaments.

The protein localises to the cytoplasm. Functionally, negative regulator of replication initiation, which contributes to regulation of DNA replication and ensures that replication initiation occurs exactly once per chromosome per cell cycle. Binds to pairs of hemimethylated GATC sequences in the oriC region, thus preventing assembly of replication proteins and re-initiation at newly replicated origins. Repression is relieved when the region becomes fully methylated. The polypeptide is Negative modulator of initiation of replication (Photobacterium profundum (strain SS9)).